We begin with the raw amino-acid sequence, 488 residues long: Glutamyl-tRNA(Gln) amidotransferase subunit A (488 aa).

Residues Lys78 and Ser153 each act as charge relay system in the active site. Ser177 functions as the Acyl-ester intermediate in the catalytic mechanism.

This sequence belongs to the amidase family. GatA subfamily. Heterotrimer of A, B and C subunits.

The enzyme catalyses L-glutamyl-tRNA(Gln) + L-glutamine + ATP + H2O = L-glutaminyl-tRNA(Gln) + L-glutamate + ADP + phosphate + H(+). Its function is as follows. Allows the formation of correctly charged Gln-tRNA(Gln) through the transamidation of misacylated Glu-tRNA(Gln) in organisms which lack glutaminyl-tRNA synthetase. The reaction takes place in the presence of glutamine and ATP through an activated gamma-phospho-Glu-tRNA(Gln). This chain is Glutamyl-tRNA(Gln) amidotransferase subunit A, found in Thermoanaerobacter pseudethanolicus (strain ATCC 33223 / 39E) (Clostridium thermohydrosulfuricum).